The primary structure comprises 600 residues: NAD-dependent malic enzyme, mitochondrial (600 aa).

Residues 1–68 constitute a mitochondrion transit peptide; sequence MTRTPFTLSL…NMPIAAPVRT (68 aa). Residue arginine 93 participates in fumarate binding. Tyrosine 138 functions as the Proton donor in the catalytic mechanism. Arginine 194 serves as a coordination point for (S)-malate. Residue arginine 194 participates in NAD(+) binding. Lysine 212 serves as the catalytic Proton acceptor. The a divalent metal cation site is built by glutamate 283, aspartate 284, and aspartate 307. NAD(+) is bound by residues glycine 344 and alanine 347. Residues asparagine 458 and asparagine 502 each coordinate (S)-malate.

It belongs to the malic enzymes family. Requires Mg(2+) as cofactor. It depends on Mn(2+) as a cofactor.

The protein localises to the mitochondrion matrix. It localises to the cytoplasm. It is found in the cytosol. Its subcellular location is the nucleus. The catalysed reaction is (S)-malate + NAD(+) = pyruvate + CO2 + NADH. The enzyme catalyses oxaloacetate + H(+) = pyruvate + CO2. In terms of biological role, NAD-dependent mitochondrial malic enzyme that catalyzes the oxidative decarboxylation of malate to pyruvate. The chain is NAD-dependent malic enzyme, mitochondrial from Cryptococcus neoformans var. grubii serotype A (strain H99 / ATCC 208821 / CBS 10515 / FGSC 9487) (Filobasidiella neoformans var. grubii).